The primary structure comprises 293 residues: Bifunctional protein FolD (293 aa).

NADP(+)-binding positions include 164–166 (GRS), Ser-193, and Thr-234.

Belongs to the tetrahydrofolate dehydrogenase/cyclohydrolase family. In terms of assembly, homodimer.

It catalyses the reaction (6R)-5,10-methylene-5,6,7,8-tetrahydrofolate + NADP(+) = (6R)-5,10-methenyltetrahydrofolate + NADPH. The enzyme catalyses (6R)-5,10-methenyltetrahydrofolate + H2O = (6R)-10-formyltetrahydrofolate + H(+). The protein operates within one-carbon metabolism; tetrahydrofolate interconversion. Catalyzes the oxidation of 5,10-methylenetetrahydrofolate to 5,10-methenyltetrahydrofolate and then the hydrolysis of 5,10-methenyltetrahydrofolate to 10-formyltetrahydrofolate. The polypeptide is Bifunctional protein FolD (Bacteroides thetaiotaomicron (strain ATCC 29148 / DSM 2079 / JCM 5827 / CCUG 10774 / NCTC 10582 / VPI-5482 / E50)).